The primary structure comprises 316 residues: Transaldolase (316 aa).

Residue K132 is the Schiff-base intermediate with substrate of the active site.

The protein belongs to the transaldolase family. Type 1 subfamily. Homodimer.

It is found in the cytoplasm. It catalyses the reaction D-sedoheptulose 7-phosphate + D-glyceraldehyde 3-phosphate = D-erythrose 4-phosphate + beta-D-fructose 6-phosphate. It functions in the pathway carbohydrate degradation; pentose phosphate pathway; D-glyceraldehyde 3-phosphate and beta-D-fructose 6-phosphate from D-ribose 5-phosphate and D-xylulose 5-phosphate (non-oxidative stage): step 2/3. Transaldolase is important for the balance of metabolites in the pentose-phosphate pathway. This Vibrio parahaemolyticus serotype O3:K6 (strain RIMD 2210633) protein is Transaldolase.